Here is a 312-residue protein sequence, read N- to C-terminus: Protoheme IX farnesyltransferase (312 aa).

Over 1-36 the chain is Cytoplasmic; sequence MNKSNTAIDPTNVIEAGPDSSVADVQQKSWKDYLVL. The helical transmembrane segment at 37 to 55 threads the bilayer; the sequence is AKQGIVTSNLITTFAGIYL. Over 56 to 69 the chain is Extracellular; it reads AIVYTGTVFTMHLD. A helical membrane pass occupies residues 70–88; sequence TMIFALLGAALVMAGGCTL. Over 89 to 110 the chain is Cytoplasmic; the sequence is NNYIDRDIDHLMERTKERPTVT. The chain crosses the membrane as a helical span at residues 111 to 129; sequence GRFSAKHVLLVGLAQAALG. Residues 130-138 lie on the Extracellular side of the membrane; the sequence is IIFLALTTP. Residues 139 to 157 traverse the membrane as a helical segment; that stretch reads TAAVIGLIGLFIYVVLYTM. The Cytoplasmic segment spans residues 158–228; that stretch reads WTKRTTTLNT…YRAAGIPMLP (71 aa). The helical transmembrane segment at 229–247 threads the bilayer; that stretch reads VVAGFEMTKRQMVVYVAAL. The Extracellular portion of the chain corresponds to 248 to 259; that stretch reads LPVSLMLYPFGL. A helical membrane pass occupies residues 260–275; it reads VYTIVAAVLGVGWLAL. At 276–296 the chain is on the cytoplasmic side; it reads GIAGFKMKDDIKWARLMFVYS. Residues 297 to 307 traverse the membrane as a helical segment; that stretch reads LNYLTILFVLM. Over 308–312 the chain is Extracellular; it reads VIVHF.

It belongs to the UbiA prenyltransferase family.

It localises to the cell membrane. It carries out the reaction heme b + (2E,6E)-farnesyl diphosphate + H2O = Fe(II)-heme o + diphosphate. The protein operates within porphyrin-containing compound metabolism; heme O biosynthesis; heme O from protoheme: step 1/1. Converts protoheme IX and farnesyl diphosphate to heme O. The protein is Protoheme IX farnesyltransferase (ctaB) of Alkalihalophilus pseudofirmus (strain ATCC BAA-2126 / JCM 17055 / OF4) (Bacillus pseudofirmus).